We begin with the raw amino-acid sequence, 623 residues long: UvrABC system protein C (623 aa).

One can recognise a GIY-YIG domain in the interval 28 to 105; it reads GAPGVYRMLD…IKQLKPKYNV (78 aa). A UVR domain is found at 215 to 250; the sequence is TRVQEELAEQMMAASEAMEFERAAALRDRIRALTTV.

The protein belongs to the UvrC family. As to quaternary structure, interacts with UvrB in an incision complex.

It localises to the cytoplasm. Functionally, the UvrABC repair system catalyzes the recognition and processing of DNA lesions. UvrC both incises the 5' and 3' sides of the lesion. The N-terminal half is responsible for the 3' incision and the C-terminal half is responsible for the 5' incision. This Ruegeria pomeroyi (strain ATCC 700808 / DSM 15171 / DSS-3) (Silicibacter pomeroyi) protein is UvrABC system protein C.